A 118-amino-acid chain; its full sequence is Large ribosomal subunit protein uL24 (118 aa).

Belongs to the universal ribosomal protein uL24 family. Part of the 50S ribosomal subunit.

Its function is as follows. One of two assembly initiator proteins, it binds directly to the 5'-end of the 23S rRNA, where it nucleates assembly of the 50S subunit. In terms of biological role, one of the proteins that surrounds the polypeptide exit tunnel on the outside of the subunit. This Prochlorococcus marinus (strain SARG / CCMP1375 / SS120) protein is Large ribosomal subunit protein uL24.